Reading from the N-terminus, the 356-residue chain is MRDRFLRACRRQPVDRTPIWLMRQAGRYMPEYRAVRERYGFLQMVKTPEIAAEVTLQPIAAFGVDAAIIFADILPPLEGLGLRLTYEKGEGPVIHNPIRHPHDVATLHPCDPRETVAYTLDAVRLVKRELNGLPLIGFSGAPFTLASYAIEGGGSKEYRLTKRFMYEQPTAWHDLMERLGTLVAEYLIAQVEAGADAVQIFDSWAGTLAPADYRAYVLRHTQNVVATVRARLGAAAPPIIYFGTDMAGLAGELRQLGTDVLGVDWRIDLDVAWAQYGYEHAVQGNLDPMTLFAPPELIASRAREILQRAGGRPGHIFNLGHGILTETPVEHVRYLVEFVQSYPLPTTTPALQEVMQ.

Residues 23–27 (RQAGR), Asp-72, Tyr-148, Ser-203, and His-321 each bind substrate.

This sequence belongs to the uroporphyrinogen decarboxylase family. Homodimer.

Its subcellular location is the cytoplasm. It carries out the reaction uroporphyrinogen III + 4 H(+) = coproporphyrinogen III + 4 CO2. It participates in porphyrin-containing compound metabolism; protoporphyrin-IX biosynthesis; coproporphyrinogen-III from 5-aminolevulinate: step 4/4. Its function is as follows. Catalyzes the decarboxylation of four acetate groups of uroporphyrinogen-III to yield coproporphyrinogen-III. This chain is Uroporphyrinogen decarboxylase, found in Chloroflexus aggregans (strain MD-66 / DSM 9485).